The following is a 101-amino-acid chain: MAKVSSIKKNESRKKKSQSLHNKRSALKSKIYDKNISLEERFSLVMSLAQLPRNSSSTRIRNRCELTGRPRGVTRKFGISRNKLRELIGRGLVPGVVKSSW.

The segment at Met-1–Ala-26 is disordered. Residues Glu-11–Ala-26 show a composition bias toward basic residues.

This sequence belongs to the universal ribosomal protein uS14 family. As to quaternary structure, part of the 30S ribosomal subunit. Contacts proteins S3 and S10.

Binds 16S rRNA, required for the assembly of 30S particles and may also be responsible for determining the conformation of the 16S rRNA at the A site. This Rickettsia felis (strain ATCC VR-1525 / URRWXCal2) (Rickettsia azadi) protein is Small ribosomal subunit protein uS14.